Consider the following 414-residue polypeptide: MQAEAIFTGTEMLLGQIVNTNAAFLGRELAAAGISLYRQVVVGDNLVRIREAIDNARRRADLIIVSGGLGPTEDDLSREALAAALGLPLVEDPAARENVTRYFAARRRPMTPNNLKQALLPAGARAMDNPHGTAAGVFLEHEGKVYALLPGPPREFEPMLVNQLLPRLEPYGARREIIFSRVLKIAGIGESGVEEAVKDLLHSDNPTLAPLAKPGEVTLRLTARAKSQEAARSLTALLEITIRERLGDYIFGTDDDTLESVTGAILAARHLTLAVAESCTGGLLAHRVTNIPGSSDYFLGGMVTYSNEAKVKFLGVEPEVLAARGAVSPEVAAAMARGVRQAVGTDIGIGITGIAGPGGGSEEKPVGLVYLGIDFRGQVEVRRELFMGQRENIKWQSTQSALYLLWRSLRAQCE.

Belongs to the CinA family.

This Moorella thermoacetica (strain ATCC 39073 / JCM 9320) protein is Putative competence-damage inducible protein.